The sequence spans 138 residues: Endoribonuclease YbeY (138 aa).

Residues histidine 105, histidine 109, and aspartate 115 each coordinate Zn(2+).

It belongs to the endoribonuclease YbeY family. Requires Zn(2+) as cofactor.

It localises to the cytoplasm. Functionally, single strand-specific metallo-endoribonuclease involved in late-stage 70S ribosome quality control and in maturation of the 3' terminus of the 16S rRNA. This chain is Endoribonuclease YbeY, found in Chlorobium phaeobacteroides (strain BS1).